The chain runs to 582 residues: ATP-dependent lipid A-core flippase (582 aa).

The next 5 helical transmembrane spans lie at 26 to 46 (LIAASVALILNALVDSSLIYL), 68 to 88 (ILVMLFILLRGVSNYIASYCL), 140 to 160 (YVLVTIVREGAYLISLFAVMV), 164 to 184 (WQLSIVLFLLAPIIAFLISIV), and 252 to 272 (GLVQLIASLALSAVLYVATFP). Residues 27–310 (IAASVALILN…LTSVNSQFQR (284 aa)) enclose the ABC transmembrane type-1 domain. Residues 342-578 (ITFDNVIFSY…GGAYKQLYSM (237 aa)) enclose the ABC transporter domain. 376-383 (GRSGSGKS) serves as a coordination point for ATP.

The protein belongs to the ABC transporter superfamily. Lipid exporter (TC 3.A.1.106) family. In terms of assembly, homodimer.

It localises to the cell inner membrane. It catalyses the reaction ATP + H2O + lipid A-core oligosaccharideSide 1 = ADP + phosphate + lipid A-core oligosaccharideSide 2.. Its function is as follows. Involved in lipopolysaccharide (LPS) biosynthesis. Translocates lipid A-core from the inner to the outer leaflet of the inner membrane. Transmembrane domains (TMD) form a pore in the inner membrane and the ATP-binding domain (NBD) is responsible for energy generation. In Haemophilus ducreyi (strain 35000HP / ATCC 700724), this protein is ATP-dependent lipid A-core flippase.